Consider the following 111-residue polypeptide: Large ribosomal subunit protein uL24 (111 aa).

The protein belongs to the universal ribosomal protein uL24 family. Part of the 50S ribosomal subunit.

In terms of biological role, one of two assembly initiator proteins, it binds directly to the 5'-end of the 23S rRNA, where it nucleates assembly of the 50S subunit. Functionally, one of the proteins that surrounds the polypeptide exit tunnel on the outside of the subunit. The polypeptide is Large ribosomal subunit protein uL24 (Bifidobacterium animalis subsp. lactis (strain AD011)).